The chain runs to 495 residues: Membrane-bound glycerophospholipid O-acyltransferase 1 (495 aa).

Transmembrane regions (helical) follow at residues 34–54 (VNFV…RIYL), 70–90 (IFGI…LFVL), 126–146 (IYIF…MIVT), 180–200 (PSFL…AGPC), 238–258 (TGAV…FLTL), and 297–317 (YFAW…FSGV). Catalysis depends on residues N350 and H381. 3 consecutive transmembrane segments (helical) span residues 371–391 (VLTF…YFTF), 426–446 (TWAV…MLAV), and 450–470 (ISLY…IILF). S488 is subject to Phosphoserine.

It belongs to the membrane-bound acyltransferase family. Expressed in neutrophils.

Its subcellular location is the endoplasmic reticulum membrane. The catalysed reaction is a 1-acyl-sn-glycero-3-phospho-L-serine + an acyl-CoA = a 1,2-diacyl-sn-glycero-3-phospho-L-serine + CoA. The enzyme catalyses a 1-acyl-sn-glycero-3-phosphocholine + an acyl-CoA = a 1,2-diacyl-sn-glycero-3-phosphocholine + CoA. It carries out the reaction a 1-acyl-sn-glycero-3-phosphoethanolamine + an acyl-CoA = a 1,2-diacyl-sn-glycero-3-phosphoethanolamine + CoA. It catalyses the reaction 1-(9Z-octadecenoyl)-sn-glycero-3-phospho-L-serine + (9Z)-octadecenoyl-CoA = 1,2-di-(9Z)-octadecenoyl-sn-glycero-3-phospho-L-serine + CoA. The catalysed reaction is 1-(9Z-octadecenoyl)-sn-glycero-3-phospho-L-serine + octadecanoyl-CoA = 1-(9Z-octadecenoyl)-2-octadecanoyl-sn-glycero-3-phospho-L-serine + CoA. The enzyme catalyses 1-(9Z-octadecenoyl)-sn-glycero-3-phospho-L-serine + (9Z)-hexadecenoyl-CoA = 1-(9Z-octadecenoyl)-2-(9Z-hexadecenoyl)-sn-glycero-3-phospho-L-serine + CoA. It carries out the reaction 1-(9Z-octadecenoyl)-sn-glycero-3-phospho-L-serine + (9Z,12Z)-octadecadienoyl-CoA = 1-(9Z-octadecenoyl)-2-(9Z,12Z-octadienoyl)-sn-glycero-3-phospho-L-serine + CoA. It catalyses the reaction 1-hexadecanoyl-sn-glycero-3-phosphocholine + (9Z)-octadecenoyl-CoA = 1-hexadecanoyl-2-(9Z-octadecenoyl)-sn-glycero-3-phosphocholine + CoA. The catalysed reaction is a 1-O-(1Z-alkenyl)-sn-glycero-3-phosphoethanolamine + (9Z)-octadecenoyl-CoA = 1-O-(1Z)-alkenyl-2-(9Z)-octadecenoyl-sn-glycero-3-phosphoethanolamine + CoA. The enzyme catalyses 1-octadecanoyl-sn-glycero-3-phosphoethanolamine + (9Z)-octadecenoyl-CoA = 1-octadecanoyl-2-(9Z-octadecenoyl)-sn-glycero-3-phosphoethanolamine + CoA. It carries out the reaction 1-(9Z-octadecenoyl)-sn-glycero-3-phosphoethanolamine + (9Z)-octadecenoyl-CoA = 1,2-di-(9Z-octadecenoyl)-sn-glycero-3-phosphoethanolamine + CoA. It catalyses the reaction 1-hexadecanoyl-sn-glycero-3-phosphoethanolamine + (9Z)-octadecenoyl-CoA = 1-hexadecanoyl-2-(9Z-octadecenoyl)-sn-glycero-3-phosphoethanolamine + CoA. The catalysed reaction is 1-(10Z-heptadecenoyl)-sn-glycero-3-phosphoethanolamine + hexadecanoyl-CoA = 1-(10Z-heptadecenoyl)-2-hexadecanoyl-sn-glycero-3-phosphoethanolamine + CoA. The enzyme catalyses 1-(10Z-heptadecenoyl)-sn-glycero-3-phosphoethanolamine + (9Z)-octadecenoyl-CoA = 1-(10Z-heptadecenoyl)-2-(9Z-octadecenoyl)-sn-glycero-3-phosphoethanolamine + CoA. Its pathway is lipid metabolism; phospholipid metabolism. Its activity is regulated as follows. Partially inhibited by thimerosal. Its function is as follows. Acyltransferase which catalyzes the transfer of an acyl group from an acyl-CoA towards a lysophospholipid producing a phospholipid and participates in the reacylation step of the phospholipid remodeling pathway also known as the Lands cycle. Acts on lysophosphatidylserine (1-acyl-2-hydroxy-sn-glycero-3-phospho-L-serine or LPS) and lysophosphatidylethanolamine (1-acyl-sn-glycero-3-phosphoethanolamine or LPE), and to a lesser extend lysophosphatidylcholine. Prefers oleoyl-CoA as the acyl donor and 1-oleoyl-LPE as acceptor. May play a role in neurite outgrowth during neuronal differentiation. This chain is Membrane-bound glycerophospholipid O-acyltransferase 1, found in Homo sapiens (Human).